The sequence spans 1010 residues: Phosphatidylserine decarboxylase proenzyme 2 (1010 aa).

2 consecutive C2 domains span residues 1–114 (MSQA…SSWE) and 247–370 (DFES…DKPC). Residues D342, S345, and D348 each coordinate Ca(2+). The EF-hand domain occupies 458–493 (LRRQLWMHLLQGNDTQMKGTLDLIELNYFVDCLGSN). Residues D734, H793, and S880 each act as charge relay system; for autoendoproteolytic cleavage activity in the active site. Residue S880 is the Schiff-base intermediate with substrate; via pyruvic acid; for decarboxylase activity of the active site. The residue at position 880 (S880) is a Pyruvic acid (Ser); by autocatalysis.

This sequence belongs to the phosphatidylserine decarboxylase family. PSD-B subfamily. Eukaryotic type II sub-subfamily. In terms of assembly, heterodimer of a large membrane-associated beta subunit and a small pyruvoyl-containing alpha subunit. Interacts with pstB2. This interaction may be a means to structurally tether the donor membrane (ER) harboring PstB2 to acceptor membranes (Golgi/endosomes) harboring PSD2 during PtdSer transport to the site of PtdEtn synthesis. Pyruvate serves as cofactor. It depends on Ca(2+) as a cofactor. In terms of processing, is synthesized initially as an inactive proenzyme. Formation of the active enzyme involves a self-maturation process in which the active site pyruvoyl group is generated from an internal serine residue via an autocatalytic post-translational modification. Two non-identical subunits are generated from the proenzyme in this reaction, and the pyruvate is formed at the N-terminus of the alpha chain, which is derived from the carboxyl end of the proenzyme. The autoendoproteolytic cleavage occurs by a canonical serine protease mechanism, in which the side chain hydroxyl group of the serine supplies its oxygen atom to form the C-terminus of the beta chain, while the remainder of the serine residue undergoes an oxidative deamination to produce ammonia and the pyruvoyl prosthetic group on the alpha chain. During this reaction, the Ser that is part of the protease active site of the proenzyme becomes the pyruvoyl prosthetic group, which constitutes an essential element of the active site of the mature decarboxylase.

It is found in the golgi apparatus membrane. It localises to the endosome membrane. It catalyses the reaction a 1,2-diacyl-sn-glycero-3-phospho-L-serine + H(+) = a 1,2-diacyl-sn-glycero-3-phosphoethanolamine + CO2. The protein operates within phospholipid metabolism; phosphatidylethanolamine biosynthesis; phosphatidylethanolamine from CDP-diacylglycerol: step 2/2. In terms of biological role, catalyzes the formation of phosphatidylethanolamine (PtdEtn) from phosphatidylserine (PtdSer). Plays a central role in phospholipid metabolism and in the interorganelle trafficking of phosphatidylserine. The polypeptide is Phosphatidylserine decarboxylase proenzyme 2 (Komagataella phaffii (strain GS115 / ATCC 20864) (Yeast)).